The chain runs to 221 residues: Putative NAD(P)H nitroreductase YfkO (221 aa).

FMN contacts are provided by residues 15-17 (RHA) and 73-75 (QKQ). 157-162 (AAAQIG) provides a ligand contact to NAD(+). FMN contacts are provided by residues 169–170 (EG) and Arg211.

Belongs to the nitroreductase family. In terms of assembly, monomer. Requires FMN as cofactor.

The chain is Putative NAD(P)H nitroreductase YfkO (yfkO) from Bacillus subtilis (strain 168).